A 362-amino-acid chain; its full sequence is Probable dual-specificity RNA methyltransferase RlmN (362 aa).

The active-site Proton acceptor is the Glu105. The region spanning 111–344 is the Radical SAM core domain; the sequence is HEYGNSICVT…VTIRREQGHD (234 aa). Residues Cys118 and Cys349 are joined by a disulfide bond. Cys125, Cys129, and Cys132 together coordinate [4Fe-4S] cluster. S-adenosyl-L-methionine-binding positions include 175–176, Ser207, 230–232, and Asn306; these read GE and SLH. Residue Cys349 is the S-methylcysteine intermediate of the active site.

Belongs to the radical SAM superfamily. RlmN family. Requires [4Fe-4S] cluster as cofactor.

Its subcellular location is the cytoplasm. It catalyses the reaction adenosine(2503) in 23S rRNA + 2 reduced [2Fe-2S]-[ferredoxin] + 2 S-adenosyl-L-methionine = 2-methyladenosine(2503) in 23S rRNA + 5'-deoxyadenosine + L-methionine + 2 oxidized [2Fe-2S]-[ferredoxin] + S-adenosyl-L-homocysteine. The catalysed reaction is adenosine(37) in tRNA + 2 reduced [2Fe-2S]-[ferredoxin] + 2 S-adenosyl-L-methionine = 2-methyladenosine(37) in tRNA + 5'-deoxyadenosine + L-methionine + 2 oxidized [2Fe-2S]-[ferredoxin] + S-adenosyl-L-homocysteine. Functionally, specifically methylates position 2 of adenine 2503 in 23S rRNA and position 2 of adenine 37 in tRNAs. This chain is Probable dual-specificity RNA methyltransferase RlmN, found in Bacillus anthracis (strain A0248).